The primary structure comprises 900 residues: MAKPCYAVVDLETTGNQLDYDEIIQIGITFVRENKIIGTYHSMIKTDLEIPPFIQALTSIEEDMLNQAPYFHEIAEDIYKQIDGCIFVAHNVAFDLNFIKKSFKQCHINYRPKKVMDTLELFKVAFPTDKSYQLSELAEAHGIILNNAHRADEDAATTAQLMIIAFEKFESLPLDTLKQLYYLSKNLKYDLHDIIFEMVRNYDEQTLSDRFDQFEQIIYKKQIDFKAPTVQFGGNLKALYTLVTKELGLTYRPQQLYLSEIILEQLMHSEKAMIEAPLGSGKSFAYLLASLMYNIETGKHVMISTNTKLLQNQLLEKDIPAIKKALDFKINATLIKSKRDYIALGLISQILEEESSNYEVCILKMQLLIWITETDTGDIQELDLKGGQKMYFEQKLETYVPVRNDIHYFNFIKRNAQNIQIGITNHAHLIHAAHDNSIYQLFDDCIIDEAHRLPDYALNQVTNELSYADIKYQLGLIGKTENEKLLKSIDLLEQQRILEKLDIPPIDVFGLKTTVNEIHDLNEQLFTTMYDIIQSSEIQDDEVHKLHFVYHFDVTPILNDLHAIIHKLNMTLEFFNGMSHKSIKSVRKQFLYINDRFKDIEQSLKNKHTCYLSIKNLNQKSTIRLNVKDYDVKEILTKQVLDKFKSLTFISGTLTFNHSFENFKQWFNKDIEFNTYEIDTTVTSPNQTTVFIPNDVSSYNYKNINDYVSSIVNYVIEYVSVVESKCLILFTSYKMMHMVQELINELPEFEDYVVLTQQQNQNYKIVQQFNSFNKAILLGTGTFFEGFDFQSNGIKCVMIAKLPFMNQNNTKYWLMESEFTSTFKEYVLPDAVTRFRQGLGRLIRSENDKGIIVSFDDRLIRSNYKQFFEQSLERYRQKKGDIKQFSTLLKKLKKENAKKP.

The Exonuclease domain occupies 8–161 (VVDLETTGNQ…DEDAATTAQL (154 aa)). The 256-residue stretch at 241–496 (TLVTKELGLT…KSIDLLEQQR (256 aa)) folds into the Helicase ATP-binding domain. 276-283 (APLGSGKS) is an ATP binding site. The short motif at 448–451 (DEAH) is the DEAH box element. The Helicase C-terminal domain occupies 714 to 883 (YVIEYVSVVE…RYRQKKGDIK (170 aa)).

The protein belongs to the helicase family. DinG subfamily. Type 2 sub-subfamily.

In terms of biological role, 3'-5' exonuclease. This chain is 3'-5' exonuclease DinG, found in Staphylococcus saprophyticus subsp. saprophyticus (strain ATCC 15305 / DSM 20229 / NCIMB 8711 / NCTC 7292 / S-41).